Reading from the N-terminus, the 214-residue chain is Large ribosomal subunit protein uL3 (214 aa).

Belongs to the universal ribosomal protein uL3 family. Part of the 50S ribosomal subunit. Forms a cluster with proteins L14 and L19.

Functionally, one of the primary rRNA binding proteins, it binds directly near the 3'-end of the 23S rRNA, where it nucleates assembly of the 50S subunit. This is Large ribosomal subunit protein uL3 from Streptomyces coelicolor (strain ATCC BAA-471 / A3(2) / M145).